A 194-amino-acid polypeptide reads, in one-letter code: Putative lipoprotein LppK (194 aa).

A signal peptide spans 1 to 26 (MSRWTHRTFFIALSAIVTTAGFGSSG). Cys27 is lipidated: N-palmitoyl cysteine. A lipid anchor (S-diacylglycerol cysteine) is attached at Cys27. The tract at residues 174–194 (GNSSGLTNPAPIKAPTPTPSH) is disordered. Positions 185–194 (IKAPTPTPSH) are enriched in pro residues.

The protein belongs to the MTB12 family.

It localises to the cell membrane. In Mycobacterium leprae (strain TN), this protein is Putative lipoprotein LppK (lppK).